Here is a 246-residue protein sequence, read N- to C-terminus: Small ribosomal subunit protein uS2 (246 aa).

This sequence belongs to the universal ribosomal protein uS2 family.

This is Small ribosomal subunit protein uS2 from Helicobacter acinonychis (strain Sheeba).